The primary structure comprises 498 residues: Lysine--tRNA ligase (498 aa).

Mg(2+) is bound by residues Glu407 and Glu414.

Belongs to the class-II aminoacyl-tRNA synthetase family. Homodimer. The cofactor is Mg(2+).

It is found in the cytoplasm. The catalysed reaction is tRNA(Lys) + L-lysine + ATP = L-lysyl-tRNA(Lys) + AMP + diphosphate. The polypeptide is Lysine--tRNA ligase (Rhizobium etli (strain ATCC 51251 / DSM 11541 / JCM 21823 / NBRC 15573 / CFN 42)).